We begin with the raw amino-acid sequence, 367 residues long: Beta sliding clamp (367 aa).

The protein belongs to the beta sliding clamp family. In terms of assembly, forms a ring-shaped head-to-tail homodimer around DNA which binds and tethers DNA polymerases and other proteins to the DNA. The DNA replisome complex has a single clamp-loading complex (3 tau and 1 each of delta, delta', psi and chi subunits) which binds 3 Pol III cores (1 core on the leading strand and 2 on the lagging strand) each with a beta sliding clamp dimer. Additional proteins in the replisome are other copies of gamma, psi and chi, Ssb, DNA helicase and RNA primase.

The protein localises to the cytoplasm. Functionally, confers DNA tethering and processivity to DNA polymerases and other proteins. Acts as a clamp, forming a ring around DNA (a reaction catalyzed by the clamp-loading complex) which diffuses in an ATP-independent manner freely and bidirectionally along dsDNA. Initially characterized for its ability to contact the catalytic subunit of DNA polymerase III (Pol III), a complex, multichain enzyme responsible for most of the replicative synthesis in bacteria; Pol III exhibits 3'-5' exonuclease proofreading activity. The beta chain is required for initiation of replication as well as for processivity of DNA replication. The chain is Beta sliding clamp (dnaN) from Pseudomonas aeruginosa (strain ATCC 15692 / DSM 22644 / CIP 104116 / JCM 14847 / LMG 12228 / 1C / PRS 101 / PAO1).